A 569-amino-acid chain; its full sequence is Proline--tRNA ligase (569 aa).

The protein belongs to the class-II aminoacyl-tRNA synthetase family. ProS type 1 subfamily. As to quaternary structure, homodimer.

The protein resides in the cytoplasm. It catalyses the reaction tRNA(Pro) + L-proline + ATP = L-prolyl-tRNA(Pro) + AMP + diphosphate. Its function is as follows. Catalyzes the attachment of proline to tRNA(Pro) in a two-step reaction: proline is first activated by ATP to form Pro-AMP and then transferred to the acceptor end of tRNA(Pro). As ProRS can inadvertently accommodate and process non-cognate amino acids such as alanine and cysteine, to avoid such errors it has two additional distinct editing activities against alanine. One activity is designated as 'pretransfer' editing and involves the tRNA(Pro)-independent hydrolysis of activated Ala-AMP. The other activity is designated 'posttransfer' editing and involves deacylation of mischarged Ala-tRNA(Pro). The misacylated Cys-tRNA(Pro) is not edited by ProRS. In Campylobacter jejuni subsp. jejuni serotype O:23/36 (strain 81-176), this protein is Proline--tRNA ligase.